Here is a 154-residue protein sequence, read N- to C-terminus: Myoglobin (154 aa).

The Globin domain occupies 2–148 (GLSDGEWQSV…FRNDIAAKYK (147 aa)). Serine 4 is subject to Phosphoserine. Histidine 65 is a binding site for nitrite. Histidine 65 lines the O2 pocket. Position 68 is a phosphothreonine (threonine 68). A heme b-binding site is contributed by histidine 94.

It belongs to the globin family. Monomeric.

It is found in the cytoplasm. It localises to the sarcoplasm. The enzyme catalyses Fe(III)-heme b-[protein] + nitric oxide + H2O = Fe(II)-heme b-[protein] + nitrite + 2 H(+). The catalysed reaction is H2O2 + AH2 = A + 2 H2O. Monomeric heme protein which primary function is to store oxygen and facilitate its diffusion within muscle tissues. Reversibly binds oxygen through a pentacoordinated heme iron and enables its timely and efficient release as needed during periods of heightened demand. Depending on the oxidative conditions of tissues and cells, and in addition to its ability to bind oxygen, it also has a nitrite reductase activity whereby it regulates the production of bioactive nitric oxide. Under stress conditions, like hypoxia and anoxia, it also protects cells against reactive oxygen species thanks to its pseudoperoxidase activity. The chain is Myoglobin (MB) from Perodicticus potto edwarsi (Potto).